Consider the following 406-residue polypeptide: Argininosuccinate synthase (406 aa).

8-16 (AYSGGLDTS) is an ATP binding site. Residue Tyr-86 participates in L-citrulline binding. Residue Gly-116 coordinates ATP. The L-aspartate site is built by Thr-118, Asn-122, and Asp-123. Asn-122 is an L-citrulline binding site. Arg-126, Ser-174, Ser-183, Glu-259, and Tyr-271 together coordinate L-citrulline.

The protein belongs to the argininosuccinate synthase family. Type 1 subfamily. In terms of assembly, homotetramer.

The protein localises to the cytoplasm. The catalysed reaction is L-citrulline + L-aspartate + ATP = 2-(N(omega)-L-arginino)succinate + AMP + diphosphate + H(+). It functions in the pathway amino-acid biosynthesis; L-arginine biosynthesis; L-arginine from L-ornithine and carbamoyl phosphate: step 2/3. In Dehalococcoides mccartyi (strain ATCC BAA-2266 / KCTC 15142 / 195) (Dehalococcoides ethenogenes (strain 195)), this protein is Argininosuccinate synthase.